A 218-amino-acid chain; its full sequence is Glutathione S-transferase class-mu 26 kDa isozyme (218 aa).

The GST N-terminal domain maps to 2–83 (SPILGYWKIK…YIADKHNMLG (82 aa)). Glutathione is bound by residues 7–8 (YW), 41–45 (WRNKK), 54–55 (NL), and 67–68 (QS). Residues 85–203 (CPKERAEISM…KSSKYIAWPL (119 aa)) form the GST C-terminal domain. Substrate is bound at residue Tyr-111.

It belongs to the GST superfamily. Mu family. Homodimer.

It carries out the reaction RX + glutathione = an S-substituted glutathione + a halide anion + H(+). In terms of biological role, conjugation of reduced glutathione to a wide number of exogenous and endogenous hydrophobic electrophiles. Its function is as follows. GST isoenzymes appear to play a central role in the parasite detoxification system. Other functions are also suspected including a role in increasing the solubility of haematin in the parasite gut. The chain is Glutathione S-transferase class-mu 26 kDa isozyme from Schistosoma japonicum (Blood fluke).